Reading from the N-terminus, the 161-residue chain is Cytochrome c-type biogenesis protein CcmE (161 aa).

Residues 1-8 (MNPVRKKR) lie on the Cytoplasmic side of the membrane. A helical; Signal-anchor for type II membrane protein transmembrane segment spans residues 9–29 (LYIVLAILCGVSIAVALALTA). The Periplasmic segment spans residues 30 to 161 (LQENINLFYT…AKGYQQESAQ (132 aa)). Heme is bound by residues histidine 124 and tyrosine 128.

It belongs to the CcmE/CycJ family.

Its subcellular location is the cell inner membrane. Its function is as follows. Heme chaperone required for the biogenesis of c-type cytochromes. Transiently binds heme delivered by CcmC and transfers the heme to apo-cytochromes in a process facilitated by CcmF and CcmH. The chain is Cytochrome c-type biogenesis protein CcmE from Ectopseudomonas mendocina (strain ymp) (Pseudomonas mendocina).